Here is a 451-residue protein sequence, read N- to C-terminus: Phosphoglucosamine mutase (451 aa).

The Phosphoserine intermediate role is filled by Ser-102. Residues Ser-102, Asp-242, Asp-244, and Asp-246 each contribute to the Mg(2+) site. Ser-102 bears the Phosphoserine mark.

It belongs to the phosphohexose mutase family. Requires Mg(2+) as cofactor. Post-translationally, activated by phosphorylation.

It carries out the reaction alpha-D-glucosamine 1-phosphate = D-glucosamine 6-phosphate. In terms of biological role, catalyzes the conversion of glucosamine-6-phosphate to glucosamine-1-phosphate. The sequence is that of Phosphoglucosamine mutase from Staphylococcus carnosus (strain TM300).